Consider the following 59-residue polypeptide: Large ribosomal subunit protein uL30 (59 aa).

The protein belongs to the universal ribosomal protein uL30 family. As to quaternary structure, part of the 50S ribosomal subunit.

This Solidesulfovibrio magneticus (strain ATCC 700980 / DSM 13731 / RS-1) (Desulfovibrio magneticus) protein is Large ribosomal subunit protein uL30.